The following is a 60-amino-acid chain: Large ribosomal subunit protein bL32 (60 aa).

It belongs to the bacterial ribosomal protein bL32 family.

This chain is Large ribosomal subunit protein bL32, found in Ehrlichia ruminantium (strain Gardel).